The chain runs to 491 residues: Protein nucleotidyltransferase YdiU (491 aa).

The ATP site is built by Gly94, Gly96, Arg97, Lys117, Asp129, Gly130, Arg180, and Arg187. The active-site Proton acceptor is Asp256. Asn257 and Asp266 together coordinate Mg(2+). Asp266 serves as a coordination point for ATP.

It belongs to the SELO family. Mg(2+) serves as cofactor. The cofactor is Mn(2+).

It carries out the reaction L-seryl-[protein] + ATP = 3-O-(5'-adenylyl)-L-seryl-[protein] + diphosphate. The enzyme catalyses L-threonyl-[protein] + ATP = 3-O-(5'-adenylyl)-L-threonyl-[protein] + diphosphate. It catalyses the reaction L-tyrosyl-[protein] + ATP = O-(5'-adenylyl)-L-tyrosyl-[protein] + diphosphate. The catalysed reaction is L-histidyl-[protein] + UTP = N(tele)-(5'-uridylyl)-L-histidyl-[protein] + diphosphate. It carries out the reaction L-seryl-[protein] + UTP = O-(5'-uridylyl)-L-seryl-[protein] + diphosphate. The enzyme catalyses L-tyrosyl-[protein] + UTP = O-(5'-uridylyl)-L-tyrosyl-[protein] + diphosphate. Nucleotidyltransferase involved in the post-translational modification of proteins. It can catalyze the addition of adenosine monophosphate (AMP) or uridine monophosphate (UMP) to a protein, resulting in modifications known as AMPylation and UMPylation. This chain is Protein nucleotidyltransferase YdiU, found in Bacillus cytotoxicus (strain DSM 22905 / CIP 110041 / 391-98 / NVH 391-98).